Reading from the N-terminus, the 143-residue chain is Dehydrin DHN2 (143 aa).

A compositionally biased stretch (polar residues) spans 1–10 (MEYQGQTGHA). Positions 1-143 (MEYQGQTGHA…IKEKLPGGQH (143 aa)) are disordered. Over residues 24–34 (GHGGATGGPTG) the composition is skewed to gly residues. Residues 35 to 46 (THGAAAAAAGTG) are compositionally biased toward low complexity. The span at 51–61 (TRDDHKTDGVL) shows a compositional bias: basic and acidic residues. Over residues 62-71 (RRSGSSSSSS) the composition is skewed to low complexity. A compositionally biased stretch (basic and acidic residues) spans 86–101 (KEKIKEKLPGGAHKDA). A compositionally biased stretch (low complexity) spans 109–123 (AAGEYAGTGTHGAEA). Residues 124–143 (TGEKKGVMDKIKEKLPGGQH) show a composition bias toward basic and acidic residues.

This sequence belongs to the plant dehydrin family.

The protein is Dehydrin DHN2 (DHN2) of Hordeum vulgare (Barley).